The primary structure comprises 274 residues: 2,3,4,5-tetrahydropyridine-2,6-dicarboxylate N-succinyltransferase (274 aa).

Arginine 104 and aspartate 141 together coordinate substrate.

The protein belongs to the transferase hexapeptide repeat family. In terms of assembly, homotrimer.

The protein localises to the cytoplasm. The enzyme catalyses (S)-2,3,4,5-tetrahydrodipicolinate + succinyl-CoA + H2O = (S)-2-succinylamino-6-oxoheptanedioate + CoA. The protein operates within amino-acid biosynthesis; L-lysine biosynthesis via DAP pathway; LL-2,6-diaminopimelate from (S)-tetrahydrodipicolinate (succinylase route): step 1/3. The protein is 2,3,4,5-tetrahydropyridine-2,6-dicarboxylate N-succinyltransferase of Buchnera aphidicola subsp. Acyrthosiphon pisum (strain APS) (Acyrthosiphon pisum symbiotic bacterium).